The following is an 83-amino-acid chain: MKKGIHPDYQEVCFMDAATGFKFVAGSTLKSSETVEFEGNTYPLIRVEISSDSHPFYTGKQKFAAADGRIERFNKKYGFNKKN.

The protein belongs to the bacterial ribosomal protein bL31 family. Type B subfamily. In terms of assembly, part of the 50S ribosomal subunit.

Binds the 23S rRNA. The chain is Large ribosomal subunit protein bL31B from Lactobacillus delbrueckii subsp. bulgaricus (strain ATCC 11842 / DSM 20081 / BCRC 10696 / JCM 1002 / NBRC 13953 / NCIMB 11778 / NCTC 12712 / WDCM 00102 / Lb 14).